A 64-amino-acid polypeptide reads, in one-letter code: Small cysteine-rich protein (64 aa).

The signal sequence occupies residues 1–17 (FVCVQARQIDPEQILRT). Positions 18-19 (PE) are excised as a propeptide.

Post-translationally, contains 4 disulfide bonds.

The protein localises to the secreted. The protein resides in the nematocyst. The polypeptide is Small cysteine-rich protein (Anemonia viridis (Snakelocks anemone)).